A 293-amino-acid polypeptide reads, in one-letter code: Pyridoxal 5'-phosphate synthase subunit PdxS (293 aa).

Position 23 (aspartate 23) interacts with D-ribose 5-phosphate. The Schiff-base intermediate with D-ribose 5-phosphate role is filled by lysine 80. Residue glycine 152 participates in D-ribose 5-phosphate binding. Arginine 164 is a binding site for D-glyceraldehyde 3-phosphate. D-ribose 5-phosphate contacts are provided by residues glycine 213 and 234–235 (GS).

This sequence belongs to the PdxS/SNZ family. As to quaternary structure, in the presence of PdxT, forms a dodecamer of heterodimers.

It carries out the reaction aldehydo-D-ribose 5-phosphate + D-glyceraldehyde 3-phosphate + L-glutamine = pyridoxal 5'-phosphate + L-glutamate + phosphate + 3 H2O + H(+). It functions in the pathway cofactor biosynthesis; pyridoxal 5'-phosphate biosynthesis. Its function is as follows. Catalyzes the formation of pyridoxal 5'-phosphate from ribose 5-phosphate (RBP), glyceraldehyde 3-phosphate (G3P) and ammonia. The ammonia is provided by the PdxT subunit. Can also use ribulose 5-phosphate and dihydroxyacetone phosphate as substrates, resulting from enzyme-catalyzed isomerization of RBP and G3P, respectively. In Niallia circulans (Bacillus circulans), this protein is Pyridoxal 5'-phosphate synthase subunit PdxS.